A 146-amino-acid chain; its full sequence is Ribonuclease H (146 aa).

One can recognise an RNase H type-1 domain in the interval 1-136 (MKHIEIYTDG…CDTLAREAAL (136 aa)). Mg(2+) is bound by residues Asp9, Glu47, Asp69, and Asp128.

It belongs to the RNase H family. Monomer. The cofactor is Mg(2+).

Its subcellular location is the cytoplasm. It catalyses the reaction Endonucleolytic cleavage to 5'-phosphomonoester.. Its function is as follows. Endonuclease that specifically degrades the RNA of RNA-DNA hybrids. The polypeptide is Ribonuclease H (Campylobacter jejuni subsp. jejuni serotype O:23/36 (strain 81-176)).